Consider the following 2535-residue polypeptide: Piezo-type mechanosensitive ion channel component 1 (2535 aa).

Helical transmembrane passes span L13–L25, A29–L44, and L59–L81. An N-linked (GlcNAc...) asparagine glycan is attached at N100. 5 helical membrane-spanning segments follow: residues V122–L138, L193–A212, S215–C234, L246–T266, and W308–L328. Positions D346–E357 are enriched in acidic residues. Residues D346–D377 form a disordered region. Residues P358–P376 are compositionally biased toward low complexity. An N-linked (GlcNAc...) asparagine glycan is attached at N380. Helical transmembrane passes span L416–Y436, W439–V454, L460–W482, C510–L527, I572–G592, L594–V614, V625–F646, and L677–L693. S749 is modified (phosphoserine). The next 12 helical transmembrane spans lie at L803 to K814, V818 to L831, V846 to L860, G913 to R940, G981 to R996, F999 to R1014, C1028 to L1043, T1083 to A1104, Y1140 to T1166, G1172 to L1190, L1204 to S1222, and I1272 to F1288. Residues H1325–S1356 are a coiled coil. 2 disordered regions span residues A1345–W1383 and S1556–S1597. A compositionally biased stretch (polar residues) spans Q1352–P1365. Residues S1372 and S1377 each carry the phosphoserine modification. Residues S1579–S1597 show a composition bias toward polar residues. Phosphoserine is present on residues S1614, S1618, and S1633. 4 consecutive transmembrane segments (helical) span residues P1644–M1687, A1692–L1707, F1716–F1734, and D1767–L1788. Composition is skewed to basic and acidic residues over residues P1801–D1811 and P1842–P1867. The tract at residues P1801–L1911 is disordered. The segment covering Q1868–K1881 has biased composition (basic residues). Helical transmembrane passes span Y1965–W1984, P2005–I2021, A2036–V2056, A2065–L2080, and G2181–I2201. C2425 and C2429 are oxidised to a cystine. Residues L2446–G2466 form a helical membrane-spanning segment.

This sequence belongs to the PIEZO (TC 1.A.75) family. In terms of assembly, homotrimer; the homotrimer forms a propeller-shaped Piezo channel with a cation-ion conducting pore. Heterotrimeric interaction may occur between PIEZO1 and PIEZO2. Interacts with PKD2. Interacts with STOM13. Interacts with TMC1, TMC2, PCDH15 and CIB2; the interaction may be part of the MET complex. Interacts with MDFIC (via C-terminus); the interaction prolongs Piezo channel inactivation. Interacts with MDFI (via C-terminus); the interaction prolongs Piezo channel inactivation. Moderate expression in lung and kidney. Very weak expression in heart, spleen and liver.

It is found in the endoplasmic reticulum membrane. The protein resides in the endoplasmic reticulum-Golgi intermediate compartment membrane. It localises to the cell membrane. The protein localises to the cell projection. Its subcellular location is the lamellipodium membrane. The catalysed reaction is K(+)(in) = K(+)(out). It catalyses the reaction Na(+)(in) = Na(+)(out). The enzyme catalyses Ca(2+)(in) = Ca(2+)(out). It carries out the reaction Mg(2+)(in) = Mg(2+)(out). Regulated by auxillary subunits MDFIC and MDFI. Down-regulated by phosphatidylserines exposed on the cell surface. Divalent ions decrease the single-channel permeability of K(+). Functionally, pore-forming subunit of the mechanosensitive non-specific cation Piezo channel required for rapidly adapting mechanically activated (MA) currents and has a key role in sensing touch and tactile pain. Piezo channels are homotrimeric three-blade propeller-shaped structures that utilize a cap-motion and plug-and-latch mechanism to gate their ion-conducting pathways. Generates currents characterized by a linear current-voltage relationship that are sensitive to ruthenium red and gadolinium. Conductance to monovalent alkali ions is highest for K(+), intermediate for Na(+) and lowest for Li(+). Divalent ions except for Mn(2+) permeate the channel but more slowly than the monovalent ions and they also reduce K(+) currents. Plays a key role in epithelial cell adhesion by maintaining integrin activation through R-Ras recruitment to the ER, most probably in its activated state, and subsequent stimulation of calpain signaling. In inner ear hair cells, PIEZO1/2 subunits may constitute part of the mechanotransducer (MET) non-selective cation channel complex where they may act as pore-forming ion-conducting component in the complex. In the kidney, may contribute to the detection of intraluminal pressure changes and to urine flow sensing. Acts as a shear-stress sensor that promotes endothelial cell organization and alignment in the direction of blood flow through calpain activation. Plays a key role in blood vessel formation and vascular structure in both development and adult physiology. Acts as a sensor of phosphatidylserine (PS) flipping at the plasma membrane and governs morphogenesis of muscle cells. In myoblasts, flippase-mediated PS enrichment at the inner leaflet of plasma membrane triggers channel activation and Ca(2+) influx followed by Rho GTPases signal transduction, leading to assembly of cortical actomyosin fibers and myotube formation. This chain is Piezo-type mechanosensitive ion channel component 1 (Piezo1), found in Rattus norvegicus (Rat).